The following is a 479-amino-acid chain: MNKCIPMIINGMIQDFDNYAYKEVKLNNDNRVKLSVITESSVSKTLNIKDRINLNLNQIVNFLYTVGQRWKSEEYNRRRTYIRELKTYLGYSDEMARLEANWIAMLLCSKSALYDIVNYDLGSIHVLDEWLPRGDCYVKAQPKGVSVHLLAGNVPLSGVTSILRAILTKNECIIKTSSSDPFTANALVSSFIDVNADHPITKSMSVMYWPHDEDMTLSQRIMNHADVVIAWGGDEAIKWAVKYSPPHVDILKFGPKKSLSIIEAPKDIEAAAMGVAHDICFYDQQACFSTQDVYYIGDNLPLFLNELEKQLDRYAKILPKGSNSFDEKAAFTLTEKESLFAGYEVRKGDKQAWLIVVSPTNSFGNQPLSRSVYVHQVSDIKEIIPFVNKNRTQTVSIYPWEASLKYRDKLARSGVERIVESGMNNIFRVGGAHDSLSPLQYLVRFVSHERPFNYTTKDVAVEIEQTRYLEEDKFLVFVP.

The protein belongs to the LuxC family.

It catalyses the reaction a long-chain fatty aldehyde + NADP(+) + CoA = a long-chain fatty acyl-CoA + NADPH + H(+). The protein operates within lipid metabolism; fatty acid reduction for biolumincescence. In terms of biological role, luxC is the fatty acid reductase enzyme responsible for synthesis of the aldehyde substrate for the luminescent reaction catalyzed by luciferase. This Aliivibrio fischeri (Vibrio fischeri) protein is Long-chain acyl-protein thioester reductase (luxC).